Here is a 215-residue protein sequence, read N- to C-terminus: Redox-sensing transcriptional repressor Rex (215 aa).

Positions 18 to 57 (LYYRFLKNLHASGKQRVSSAELSDAVKVDSATIRRDFSYF) form a DNA-binding region, H-T-H motif. 92–97 (GVGNLG) is an NAD(+) binding site.

The protein belongs to the transcriptional regulatory Rex family. In terms of assembly, homodimer.

The protein localises to the cytoplasm. Functionally, modulates transcription in response to changes in cellular NADH/NAD(+) redox state. The polypeptide is Redox-sensing transcriptional repressor Rex (Bacillus licheniformis (strain ATCC 14580 / DSM 13 / JCM 2505 / CCUG 7422 / NBRC 12200 / NCIMB 9375 / NCTC 10341 / NRRL NRS-1264 / Gibson 46)).